Reading from the N-terminus, the 447-residue chain is Na(+)-translocating NADH-quinone reductase subunit A (447 aa).

Belongs to the NqrA family. In terms of assembly, composed of six subunits; NqrA, NqrB, NqrC, NqrD, NqrE and NqrF.

It catalyses the reaction a ubiquinone + n Na(+)(in) + NADH + H(+) = a ubiquinol + n Na(+)(out) + NAD(+). In terms of biological role, NQR complex catalyzes the reduction of ubiquinone-1 to ubiquinol by two successive reactions, coupled with the transport of Na(+) ions from the cytoplasm to the periplasm. NqrA to NqrE are probably involved in the second step, the conversion of ubisemiquinone to ubiquinol. The protein is Na(+)-translocating NADH-quinone reductase subunit A of Saccharophagus degradans (strain 2-40 / ATCC 43961 / DSM 17024).